The sequence spans 293 residues: Movement protein BC1 (293 aa).

This sequence belongs to the begomovirus movement protein BC1 family. In terms of assembly, binds to dimeric supercoiled plasmid DNA. Phosphorylated.

The protein resides in the host cell membrane. It localises to the host microsome membrane. The protein localises to the host endoplasmic reticulum membrane. Functionally, transports viral genome to neighboring plant cells directly through plasmosdesmata, without any budding. The movement protein allows efficient cell to cell propagation, by bypassing the host cell wall barrier. Begomovirus genome is shuttled out of nucleus by Nuclear shuttle protein (NSP) and the movement protein transports the DNA-NSP complex to cell plasmodesmata and facilitates further movement across the cell wall. The polypeptide is Movement protein BC1 (Cucurbita moschata (Winter crookneck squash)).